We begin with the raw amino-acid sequence, 58 residues long: Large ribosomal subunit protein bL32 (58 aa).

Belongs to the bacterial ribosomal protein bL32 family.

The protein is Large ribosomal subunit protein bL32 of Caldicellulosiruptor saccharolyticus (strain ATCC 43494 / DSM 8903 / Tp8T 6331).